The sequence spans 275 residues: Ovocalyxin-32 (275 aa).

The N-terminal stretch at 1-23 (MPGLRAALPAALLLLSSFPPAAA) is a signal peptide. 2 Cystatin LXN-type domains span residues 32–131 (PGVM…NKKQ) and 151–255 (TANY…GLED). The interval 254–275 (EDGSGQDSGSAAGTSHETKGNF) is disordered. A compositionally biased stretch (low complexity) spans 256–268 (GSGQDSGSAAGTS).

This sequence belongs to the protease inhibitor I47 (latexin) family. Expressed at high levels in the uterine and isthmus regions of the oviduct, and concentrated in the eggshell.

It is found in the secreted. Its function is as follows. Component of the matrix of the eggshell. The sequence is that of Ovocalyxin-32 from Gallus gallus (Chicken).